An 81-amino-acid polypeptide reads, in one-letter code: Teretoxin Tsu6.8 (81 aa).

The first 21 residues, 1-21, serve as a signal peptide directing secretion; sequence MATSGRLLCLCLVLGLIFESL. Residues 22–45 constitute a propeptide that is removed on maturation; sequence GHPVMGEKRAGENASPSARSLPKR.

It belongs to the teretoxin M (TM) superfamily. Post-translationally, contains 3 disulfide bonds. As to expression, expressed by the venom duct.

The protein localises to the secreted. The protein is Teretoxin Tsu6.8 of Terebra subulata (Chocolate spotted auger).